The sequence spans 317 residues: tRNA-dihydrouridine(20a/20b) synthase [NAD(P)+]-like (317 aa).

Residues 33-35 (PMV) and glutamine 87 contribute to the FMN site. The Proton donor role is filled by cysteine 116. Residues lysine 158, histidine 186, 216–218 (NGD), and 240–241 (AR) each bind FMN.

Belongs to the Dus family. Dus4 subfamily. The cofactor is FMN.

The enzyme catalyses 5,6-dihydrouridine(20a) in tRNA + NADP(+) = uridine(20a) in tRNA + NADPH + H(+). It catalyses the reaction 5,6-dihydrouridine(20a) in tRNA + NAD(+) = uridine(20a) in tRNA + NADH + H(+). The catalysed reaction is 5,6-dihydrouridine(20b) in tRNA + NAD(+) = uridine(20b) in tRNA + NADH + H(+). It carries out the reaction 5,6-dihydrouridine(20b) in tRNA + NADP(+) = uridine(20b) in tRNA + NADPH + H(+). Functionally, catalyzes the synthesis of dihydrouridine, a modified base found in the D-loop of most tRNAs. In Homo sapiens (Human), this protein is tRNA-dihydrouridine(20a/20b) synthase [NAD(P)+]-like (DUS4L).